We begin with the raw amino-acid sequence, 266 residues long: Diphthine synthase (266 aa).

Residues Leu9, Asp84, Val87, 112-113, Leu169, Ala210, and His235 contribute to the S-adenosyl-L-methionine site; that span reads SI.

This sequence belongs to the diphthine synthase family. In terms of assembly, homodimer.

The enzyme catalyses 2-[(3S)-amino-3-carboxypropyl]-L-histidyl-[translation elongation factor 2] + 3 S-adenosyl-L-methionine = diphthine-[translation elongation factor 2] + 3 S-adenosyl-L-homocysteine + 3 H(+). It functions in the pathway protein modification; peptidyl-diphthamide biosynthesis. Functionally, S-adenosyl-L-methionine-dependent methyltransferase that catalyzes the trimethylation of the amino group of the modified target histidine residue in translation elongation factor 2 (EF-2), to form an intermediate called diphthine. The three successive methylation reactions represent the second step of diphthamide biosynthesis. The protein is Diphthine synthase of Methanosarcina acetivorans (strain ATCC 35395 / DSM 2834 / JCM 12185 / C2A).